Here is a 378-residue protein sequence, read N- to C-terminus: TelA-like protein SAUSA300_1299 (378 aa).

Belongs to the TelA family.

The chain is TelA-like protein SAUSA300_1299 from Staphylococcus aureus (strain USA300).